The following is a 598-amino-acid chain: Ceramide transfer protein (598 aa).

The span at Met-1–Gly-11 shows a compositional bias: polar residues. Residues Met-1–Val-24 form a disordered region. A PH domain is found at Pro-23–Thr-117. Ser-126 bears the Phosphoserine mark. Position 132 is a phosphoserine; by PKD (Ser-132). Ser-135 bears the Phosphoserine mark. The segment at Asp-202 to Asn-221 is disordered. Residues Lys-268–Lys-301 are a coiled coil. Phosphoserine is present on Ser-315. Positions Glu-321 to Glu-327 match the FFAT motif. Positions Gly-363–Ala-592 constitute an START domain. An N-acylsphing-4-enine-binding residues include Glu-446, Gln-467, Asn-504, and Tyr-553.

In terms of assembly, interacts with VAPA and VAPB. Interaction with VAPB is less efficient than with VAPA. Interacts (via FFAT motif) with the MOSPD2 (via MSP domain). Phosphorylation on Ser-132 decreases the affinity toward phosphatidylinositol 4-phosphate at Golgi membranes and reduces ceramide transfer activity. Inactivated by hyperphosphorylation of serine residues by CSNK1G2/CK1 that triggers dissociation from the Golgi complex, thus down-regulating ER-to-Golgi transport of ceramide and sphingomyelin synthesis.

It is found in the cytoplasm. The protein localises to the golgi apparatus. Its subcellular location is the endoplasmic reticulum. The catalysed reaction is N-hexadecanoylsphing-4-enine(in) = N-hexadecanoylsphing-4-enine(out). Its function is as follows. Shelters ceramides and diacylglycerol lipids inside its START domain and mediates the intracellular trafficking of ceramides and diacylglycerol lipids in a non-vesicular manner. This is Ceramide transfer protein (CERT1) from Cricetulus griseus (Chinese hamster).